Reading from the N-terminus, the 104-residue chain is ATP-dependent Clp protease adapter protein ClpS (104 aa).

Belongs to the ClpS family. Binds to the N-terminal domain of the chaperone ClpA.

In terms of biological role, involved in the modulation of the specificity of the ClpAP-mediated ATP-dependent protein degradation. The sequence is that of ATP-dependent Clp protease adapter protein ClpS from Burkholderia thailandensis (strain ATCC 700388 / DSM 13276 / CCUG 48851 / CIP 106301 / E264).